The primary structure comprises 458 residues: F-box/WD repeat-containing protein 9 (458 aa).

N-acetylmethionine is present on Met-1. Positions 1-28 (MELPPGPRDDPHAWDDDSDPELEPDTDA) are disordered. Residues 16–28 (DDSDPELEPDTDA) are compositionally biased toward acidic residues. Residues Ser-18 and Ser-59 each carry the phosphoserine modification. Residues 76–123 (VPGLLSLPPELLLEICAYLDARLVLHVLPRVCHALRDLVRDRVTWRLR) enclose the F-box domain. 7 WD repeats span residues 171–210 (GHFASIDSVLLLQGGTLCLSGSRDRNVNLWDLQQLGVEPS), 224–261 (THKGWVWSLAALDHRVCSGSWDSTVKLWDMAADGQQFG), 264–301 (KGKAAVLCLSYRPDILVTGTYDKKVTVYDPRVGPALLK), 305–342 (LHSSAVLALLADDRHIISGSEDHTLVVFDRRANSVLQR), 344–381 (QLDSYLLCMSYQEPQLWAGDNQGLLHVFANRSGCFQLV), 387–424 (GHRSQITGIKHSLGALYTTSTDKTIRVHVPTDPPRTIC), and 427–458 (SHHNVLNGICAEGNLVVAASGGLSLEVWRLQA).

In terms of assembly, interacts with SKP1 and CUL1.

Functionally, substrate-recognition component of the SCF (SKP1-CUL1-F-box protein)-type E3 ubiquitin ligase complex. This chain is F-box/WD repeat-containing protein 9 (FBXW9), found in Bos taurus (Bovine).